The sequence spans 361 residues: MADTAHINDVPMQGKGLYSSHAALQHEAMLKALPLLQQATNTVVTNVNRNLRPLTVVEYGSAHGNNSIQPMVTILDSTPPGDIQLVFSDRPENDFNTLSTTVTTWAEGLDKAKFPHSIFPAMIPRSFYRQVVPSRSADLGFSLAALHHLDHVPKSQDGVDHQALLKRQAHLDLLQFLKLRADEIVPGGSLVLSFVSQSSSGRENYAGLVDACRNAMIDMVKDGTLPGAVAGSFYVPTYNRTLQDVQKVIEEVIPTWIAHEVFEQDCLHPAKKDLELQKSSDDYDSDEASRRYADVVVDWLMAVCAGYFLKAVKVGSDNTFTGEDAEKFLADWVKRTKHFFYKDHRDEDVVCSFIFVRLERV.

5 residues coordinate S-adenosyl-L-homocysteine: Tyr-18, Asn-66, Asp-89, Ser-126, and Phe-127. Residues Gln-156 and Phe-233 each coordinate Mg(2+).

Belongs to the methyltransferase superfamily. Type-7 methyltransferase family. It depends on Mg(2+) as a cofactor.

The protein operates within mycotoxin biosynthesis. Functionally, methyltransferase; part of the gene cluster that mediates the biosynthesis of the mycotoxin lucilactaene and the lucilactaene-related compound NG-391 that act as cell cycle inhibitors with potent growth inhibitory activity against malarial parasites, moderate growth inhibitory activity against cancer cells, and no activity against bacteria and fungi. LUC1 performs the last step of the pathway and methylates the hydroxyl group of demethyllucilactaene at C-21 to yeald lucilactaene. The pathway begins with the hybrid PKS-NRPS synthetase LUC5 which is responsible for the condensation of one acetyl-coenzyme A (CoA) unit with six malonyl-CoA units and the amide linkage of the arising heptaketide and homoserine, subsequently releasing the first intermediate prelucilactaene B. Both the cytochrome P450 monooxygenase LUC2 and the hydrolase LUC6 function in parallel in modification of prelucilactaene B. LUC6 may catalyze the 2-pyrrolidone ring formation to form prelucilactaene C from prelucilactaene B, followed by C-15 hydroxylation by the same enzyme to give prelucilactaene D, which is then converted to prelucilactaene E by epoxidation, and finally to prelucilactaene F by cyclization. Prelucilactane D, prelucilactaene E, and prelucilactaene F can be converted to dihydrolucilactaene, NG391, and lucilactaene, respectively, via C-20 methyl group hydroxylation by the cytochrome P450 monooxygenase LUC2. However, LUC2, unlike FUS8 in fusarin C biosynthesis, is not enough for the full oxidation of the C-20 methyl group into carboxylic acid, which is a prerequisite for the final methylation step. The aldehyde dehydrogenase LUC3 is involved in the biosynthesis by further oxidation of the C-20 alcoholic analog prelucilactaene G into a carboxylic derivative. This unidentified carboxylic derivative may be converted to demethyllucilactaene. As the last step, the methyltransferase LUC1 methylates the hydroxyl group at C-21 of demethyllucilactaene to generate lucilactaene. This is Methyltransferase LUC1 from Fusarium sp.